The following is a 189-amino-acid chain: Elongation factor P (189 aa).

K34 carries the N6-(3,6-diaminohexanoyl)-5-hydroxylysine modification.

It belongs to the elongation factor P family. Post-translationally, may be beta-lysylated on the epsilon-amino group of Lys-34 by the combined action of EpmA and EpmB, and then hydroxylated on the C5 position of the same residue by EpmC (if this protein is present). Lysylation is critical for the stimulatory effect of EF-P on peptide-bond formation. The lysylation moiety may extend toward the peptidyltransferase center and stabilize the terminal 3-CCA end of the tRNA. Hydroxylation of the C5 position on Lys-34 may allow additional potential stabilizing hydrogen-bond interactions with the P-tRNA.

Its subcellular location is the cytoplasm. Its pathway is protein biosynthesis; polypeptide chain elongation. In terms of biological role, involved in peptide bond synthesis. Alleviates ribosome stalling that occurs when 3 or more consecutive Pro residues or the sequence PPG is present in a protein, possibly by augmenting the peptidyl transferase activity of the ribosome. Modification of Lys-34 is required for alleviation. The chain is Elongation factor P from Saccharophagus degradans (strain 2-40 / ATCC 43961 / DSM 17024).